A 358-amino-acid chain; its full sequence is 3-dehydroquinate synthase (358 aa).

NAD(+)-binding positions include 70–75 (DGEQYK), 104–108 (GVIGD), 128–129 (TT), Lys141, Lys150, and 168–171 (CLST). Residues Glu183, His246, and His263 each coordinate Zn(2+).

Belongs to the sugar phosphate cyclases superfamily. Dehydroquinate synthase family. Co(2+) is required as a cofactor. Requires Zn(2+) as cofactor. NAD(+) serves as cofactor.

Its subcellular location is the cytoplasm. The enzyme catalyses 7-phospho-2-dehydro-3-deoxy-D-arabino-heptonate = 3-dehydroquinate + phosphate. The protein operates within metabolic intermediate biosynthesis; chorismate biosynthesis; chorismate from D-erythrose 4-phosphate and phosphoenolpyruvate: step 2/7. Catalyzes the conversion of 3-deoxy-D-arabino-heptulosonate 7-phosphate (DAHP) to dehydroquinate (DHQ). The protein is 3-dehydroquinate synthase of Shewanella woodyi (strain ATCC 51908 / MS32).